The chain runs to 89 residues: Large ribosomal subunit protein bL27 (89 aa).

The tract at residues 1–26 (MAHKKAGGSSKNGRDSNAQRRGVKRF) is disordered.

This sequence belongs to the bacterial ribosomal protein bL27 family.

In Maridesulfovibrio salexigens (strain ATCC 14822 / DSM 2638 / NCIMB 8403 / VKM B-1763) (Desulfovibrio salexigens), this protein is Large ribosomal subunit protein bL27.